The chain runs to 142 residues: Peptidyl-prolyl cis-trans isomerase FKBP2 (142 aa).

The first 21 residues, 1-21, serve as a signal peptide directing secretion; the sequence is MRLSWFRVLTVLSICLSAVAT. Residues 49-137 enclose the PPIase FKBP-type domain; it reads GDVLHMHYTG…VFEVELLKIE (89 aa). The Prevents secretion from ER signature appears at 139–142; sequence RTEL.

This sequence belongs to the FKBP-type PPIase family. FKBP2 subfamily. As to quaternary structure, interacts with ARFGEF1/BIG1 and the C-terminal of EPB41L2. As to expression, T-cells and thymus.

Its subcellular location is the endoplasmic reticulum membrane. It carries out the reaction [protein]-peptidylproline (omega=180) = [protein]-peptidylproline (omega=0). With respect to regulation, inhibited by both FK506 and rapamycin. Functionally, PPIases accelerate the folding of proteins. It catalyzes the cis-trans isomerization of proline imidic peptide bonds in oligopeptides. This is Peptidyl-prolyl cis-trans isomerase FKBP2 (FKBP2) from Homo sapiens (Human).